A 358-amino-acid chain; its full sequence is Protein Wnt-8 (358 aa).

The first 22 residues, 1–22 (MQNTTLFILATLLIFCPFFTAS), serve as a signal peptide directing secretion. The cysteines at positions 55 and 66 are disulfide-linked. An N-linked (GlcNAc...) asparagine glycan is attached at Asn104. 10 disulfides stabilise this stretch: Cys105/Cys113, Cys115/Cys133, Cys181/Cys195, Cys183/Cys190, Cys260/Cys298, Cys276/Cys291, Cys295/Cys337, Cys313/Cys328, Cys315/Cys325, and Cys320/Cys321. Ser187 is lipidated: O-palmitoleoyl serine. 2 N-linked (GlcNAc...) asparagine glycosylation sites follow: Asn263 and Asn282.

Belongs to the Wnt family. As to quaternary structure, homooligomer; disulfide-linked, leading to inactivation. Interacts with the long chain of cer1. Palmitoleoylation is required for efficient binding to frizzled receptors. Depalmitoleoylation leads to Wnt signaling pathway inhibition. In terms of processing, proteolytic processing by tiki1 and tiki2 promotes oxidation and formation of large disulfide-bond oligomers, leading to inactivation of wnt8.

It is found in the secreted. The protein resides in the extracellular space. It localises to the extracellular matrix. Its function is as follows. Ligand for members of the frizzled family of seven transmembrane receptors. Plays a role in ventral mesodermal patterning during embryogenesis. Mimics Nieuwkoop center activity. Causes dorsal mesodermal differentiation of animal cap ectoderm when coexpressed with noggin and nuclear, sequence-specific DNA-binding protein xBra. None of these molecules causes dorsal mesoderm formation when expressed alone. This Xenopus laevis (African clawed frog) protein is Protein Wnt-8 (wnt8).